Reading from the N-terminus, the 348-residue chain is Phenylalanine--tRNA ligase alpha subunit (348 aa).

E259 contacts Mg(2+).

It belongs to the class-II aminoacyl-tRNA synthetase family. Phe-tRNA synthetase alpha subunit type 1 subfamily. Tetramer of two alpha and two beta subunits. Requires Mg(2+) as cofactor.

Its subcellular location is the cytoplasm. It catalyses the reaction tRNA(Phe) + L-phenylalanine + ATP = L-phenylalanyl-tRNA(Phe) + AMP + diphosphate + H(+). In Ligilactobacillus salivarius (strain UCC118) (Lactobacillus salivarius), this protein is Phenylalanine--tRNA ligase alpha subunit.